The following is a 955-amino-acid chain: Leucine--tRNA ligase (955 aa).

Positions 51–61 match the 'HIGH' region motif; the sequence is PYLNGVLHAGH. The short motif at 647 to 651 is the 'KMSKS' region element; sequence KLSKS. Lysine 650 serves as a coordination point for ATP.

This sequence belongs to the class-I aminoacyl-tRNA synthetase family.

The protein resides in the cytoplasm. It catalyses the reaction tRNA(Leu) + L-leucine + ATP = L-leucyl-tRNA(Leu) + AMP + diphosphate. This is Leucine--tRNA ligase from Methanococcus maripaludis (strain DSM 14266 / JCM 13030 / NBRC 101832 / S2 / LL).